The primary structure comprises 361 residues: Cobalt-precorrin-5B C(1)-methyltransferase (361 aa).

This sequence belongs to the CbiD family.

The catalysed reaction is Co-precorrin-5B + S-adenosyl-L-methionine = Co-precorrin-6A + S-adenosyl-L-homocysteine. The protein operates within cofactor biosynthesis; adenosylcobalamin biosynthesis; cob(II)yrinate a,c-diamide from sirohydrochlorin (anaerobic route): step 6/10. Catalyzes the methylation of C-1 in cobalt-precorrin-5B to form cobalt-precorrin-6A. The chain is Cobalt-precorrin-5B C(1)-methyltransferase from Methanobrevibacter smithii (strain ATCC 35061 / DSM 861 / OCM 144 / PS).